Reading from the N-terminus, the 471-residue chain is UDP-N-acetylmuramate--L-alanine ligase (471 aa).

114–120 contributes to the ATP binding site; sequence GTHGKTT.

Belongs to the MurCDEF family.

The protein resides in the cytoplasm. The catalysed reaction is UDP-N-acetyl-alpha-D-muramate + L-alanine + ATP = UDP-N-acetyl-alpha-D-muramoyl-L-alanine + ADP + phosphate + H(+). Its pathway is cell wall biogenesis; peptidoglycan biosynthesis. Its function is as follows. Cell wall formation. This Methylobacterium sp. (strain 4-46) protein is UDP-N-acetylmuramate--L-alanine ligase.